A 151-amino-acid polypeptide reads, in one-letter code: Caveolin-3 (151 aa).

Residues 1 to 83 lie on the Cytoplasmic side of the membrane; sequence MMAEEHTDLE…RLLSTLLGVP (83 aa). A Glycyl lysine isopeptide (Lys-Gly) (interchain with G-Cter in SUMO3) cross-link involves residue K38. The tract at residues 64–114 is required for interaction with DAG1; that stretch reads TFTVSKYWCYRLLSTLLGVPLALLWGFLFACISFCHIWAVVPCIKSYLIEI. The segment at residues 84 to 104 is an intramembrane region (helical); the sequence is LALLWGFLFACISFCHIWAVV. Residues 105-151 lie on the Cytoplasmic side of the membrane; sequence PCIKSYLIEIQCISHIYSLCIRTFCNPLFAALGQVCSNIKVMLRKEV.

This sequence belongs to the caveolin family. As to quaternary structure, homooligomer. Interacts with DYSF. Interacts with DLG1 and KCNA5; forms a ternary complex. Interacts with DAG1 (via its C-terminal); the interaction prevents binding of DAG1 with DMD. Interacts with TRIM72. Interacts with MUSK; may regulate MUSK signaling. Interacts with POPDC1. Interacts with CAVIN1, CAVIN2 and CAVIN4. In terms of processing, sumoylation with SUMO3 by PIAS4 may reduce agonist-induced internalization and desensitization of adrenergic receptor ABRD2.

The protein localises to the golgi apparatus membrane. It is found in the cell membrane. It localises to the membrane. The protein resides in the caveola. Its subcellular location is the sarcolemma. Functionally, may act as a scaffolding protein within caveolar membranes. Interacts directly with G-protein alpha subunits and can functionally regulate their activity. May also regulate voltage-gated potassium channels. Plays a role in the sarcolemma repair mechanism of both skeletal muscle and cardiomyocytes that permits rapid resealing of membranes disrupted by mechanical stress. Mediates the recruitment of CAVIN2 and CAVIN3 proteins to the caveolae. This is Caveolin-3 (CAV3) from Bos taurus (Bovine).